The following is a 366-amino-acid chain: Carbamoyl phosphate synthase small chain (366 aa).

Residues 1 to 171 (MLERRYLVLE…KTPYVSTGSD (171 aa)) form a CPSase region. L-glutamine contacts are provided by Ser47, Gly221, and Gly223. In terms of domain architecture, Glutamine amidotransferase type-1 spans 173–360 (SVVLLDFGKK…MTMMKEFKEK (188 aa)). Catalysis depends on Cys248, which acts as the Nucleophile. L-glutamine contacts are provided by Leu249, Gln252, Asn290, Gly292, and Tyr293. Residues His333 and Glu335 contribute to the active site.

It belongs to the CarA family. In terms of assembly, composed of two chains; the small (or glutamine) chain promotes the hydrolysis of glutamine to ammonia, which is used by the large (or ammonia) chain to synthesize carbamoyl phosphate. Tetramer of heterodimers (alpha,beta)4.

The catalysed reaction is hydrogencarbonate + L-glutamine + 2 ATP + H2O = carbamoyl phosphate + L-glutamate + 2 ADP + phosphate + 2 H(+). It carries out the reaction L-glutamine + H2O = L-glutamate + NH4(+). It participates in amino-acid biosynthesis; L-arginine biosynthesis; carbamoyl phosphate from bicarbonate: step 1/1. The protein operates within pyrimidine metabolism; UMP biosynthesis via de novo pathway; (S)-dihydroorotate from bicarbonate: step 1/3. Small subunit of the glutamine-dependent carbamoyl phosphate synthetase (CPSase). CPSase catalyzes the formation of carbamoyl phosphate from the ammonia moiety of glutamine, carbonate, and phosphate donated by ATP, constituting the first step of 2 biosynthetic pathways, one leading to arginine and/or urea and the other to pyrimidine nucleotides. The small subunit (glutamine amidotransferase) binds and cleaves glutamine to supply the large subunit with the substrate ammonia. This chain is Carbamoyl phosphate synthase small chain, found in Staphylococcus haemolyticus (strain JCSC1435).